A 261-amino-acid chain; its full sequence is tRNA pseudouridine synthase A (261 aa).

The active-site Nucleophile is Asp51. Substrate is bound at residue Tyr109.

It belongs to the tRNA pseudouridine synthase TruA family. As to quaternary structure, homodimer.

It catalyses the reaction uridine(38/39/40) in tRNA = pseudouridine(38/39/40) in tRNA. In terms of biological role, formation of pseudouridine at positions 38, 39 and 40 in the anticodon stem and loop of transfer RNAs. The protein is tRNA pseudouridine synthase A of Shewanella baltica (strain OS195).